The primary structure comprises 199 residues: dITP/XTP pyrophosphatase (199 aa).

7–12 (SANKGK) lines the substrate pocket. Mg(2+) is bound by residues D38 and D73. The Proton acceptor role is filled by D73. Residues S74, 155-158 (FGYD), K178, and 183-184 (HR) each bind substrate.

Belongs to the HAM1 NTPase family. As to quaternary structure, homodimer. The cofactor is Mg(2+).

The enzyme catalyses XTP + H2O = XMP + diphosphate + H(+). The catalysed reaction is dITP + H2O = dIMP + diphosphate + H(+). It carries out the reaction ITP + H2O = IMP + diphosphate + H(+). Functionally, pyrophosphatase that catalyzes the hydrolysis of nucleoside triphosphates to their monophosphate derivatives, with a high preference for the non-canonical purine nucleotides XTP (xanthosine triphosphate), dITP (deoxyinosine triphosphate) and ITP. Seems to function as a house-cleaning enzyme that removes non-canonical purine nucleotides from the nucleotide pool, thus preventing their incorporation into DNA/RNA and avoiding chromosomal lesions. In Aliarcobacter butzleri (strain RM4018) (Arcobacter butzleri), this protein is dITP/XTP pyrophosphatase.